The sequence spans 196 residues: Phosphoheptose isomerase (196 aa).

One can recognise an SIS domain in the interval 35 to 194; that stretch reads LTACLRCGGK…EKELFTPSGQ (160 aa). Residue 50-52 coordinates substrate; sequence NGG. Zn(2+) contacts are provided by H59 and E63. Residues E63, 92-93, 118-120, S123, and Q170 each bind substrate; these read ND and STS. The Zn(2+) site is built by Q170 and H178.

This sequence belongs to the SIS family. GmhA subfamily. In terms of assembly, homotetramer. The cofactor is Zn(2+).

It is found in the cytoplasm. The catalysed reaction is 2 D-sedoheptulose 7-phosphate = D-glycero-alpha-D-manno-heptose 7-phosphate + D-glycero-beta-D-manno-heptose 7-phosphate. It participates in carbohydrate biosynthesis; D-glycero-D-manno-heptose 7-phosphate biosynthesis; D-glycero-alpha-D-manno-heptose 7-phosphate and D-glycero-beta-D-manno-heptose 7-phosphate from sedoheptulose 7-phosphate: step 1/1. Functionally, catalyzes the isomerization of sedoheptulose 7-phosphate in D-glycero-D-manno-heptose 7-phosphate. The chain is Phosphoheptose isomerase from Syntrophotalea carbinolica (strain DSM 2380 / NBRC 103641 / GraBd1) (Pelobacter carbinolicus).